A 667-amino-acid chain; its full sequence is Interleukin-17 receptor E (667 aa).

Residues 1 to 23 (MGSSRLAALLLPLLLIVIDLSDS) form the signal peptide. Residues 24 to 454 (AGIGFRHLPH…LLCPDVSYRH (431 aa)) are Extracellular-facing. The interval 126–174 (LPRRHLSEKSHHISIPSPDISHKGLRSKRTQPSDPETWESLPRLDSQRH) is disordered. N-linked (GlcNAc...) asparagine glycans are attached at residues asparagine 318, asparagine 347, and asparagine 364. Residues 455–475 (LGLLILALLALLTLLGVVLAL) traverse the membrane as a helical segment. Over 476-667 (TCRRPQSGPG…REAARLADLG (192 aa)) the chain is Cytoplasmic. Positions 487–624 (ARPVLLLHAA…LLRDLPRLLR (138 aa)) constitute an SEFIR domain.

As to quaternary structure, forms heterodimers with IL17RA; the heterodimer binds IL17C. Predominantly expressed in mucosal tissues with high levels in keratinocytes and colon epithelial cells. Very low expression in dermal fibroblasts. Expressed in various tumor cell lines.

The protein resides in the cell membrane. It localises to the cytoplasm. Its subcellular location is the secreted. Functionally, specific functional receptor for IL17C. May be signaling through the NF-kappa-B and MAPK pathways. May require TRAF3IP2 /ACT1 for signaling. May be a crucial regulator in innate immunity to bacterial pathogens. Isoform 2 and isoform 4 may be either cytoplasmic inactive or dominant active forms. Isoform 3 and isoform 5 may act as soluble decoy receptors. In Homo sapiens (Human), this protein is Interleukin-17 receptor E (IL17RE).